A 375-amino-acid chain; its full sequence is 4-hydroxy-3-methylbut-2-en-1-yl diphosphate synthase (flavodoxin) (375 aa).

4 residues coordinate [4Fe-4S] cluster: C275, C278, C310, and E317.

Belongs to the IspG family. Requires [4Fe-4S] cluster as cofactor.

It catalyses the reaction (2E)-4-hydroxy-3-methylbut-2-enyl diphosphate + oxidized [flavodoxin] + H2O + 2 H(+) = 2-C-methyl-D-erythritol 2,4-cyclic diphosphate + reduced [flavodoxin]. The protein operates within isoprenoid biosynthesis; isopentenyl diphosphate biosynthesis via DXP pathway; isopentenyl diphosphate from 1-deoxy-D-xylulose 5-phosphate: step 5/6. In terms of biological role, converts 2C-methyl-D-erythritol 2,4-cyclodiphosphate (ME-2,4cPP) into 1-hydroxy-2-methyl-2-(E)-butenyl 4-diphosphate. The sequence is that of 4-hydroxy-3-methylbut-2-en-1-yl diphosphate synthase (flavodoxin) from Ruegeria pomeroyi (strain ATCC 700808 / DSM 15171 / DSS-3) (Silicibacter pomeroyi).